The sequence spans 312 residues: Malate dehydrogenase (312 aa).

NAD(+) contacts are provided by residues 12-17 (GAGFTG) and D36. Substrate-binding residues include R87 and R93. NAD(+) is bound by residues N100 and 123–125 (LTN). N125 is a substrate binding site. S149 is modified (phosphoserine). Residue R156 participates in substrate binding. The active-site Proton acceptor is the H180.

Belongs to the LDH/MDH superfamily. MDH type 3 family.

It carries out the reaction (S)-malate + NAD(+) = oxaloacetate + NADH + H(+). In terms of biological role, catalyzes the reversible oxidation of malate to oxaloacetate. This chain is Malate dehydrogenase, found in Anoxybacillus flavithermus (strain DSM 21510 / WK1).